The chain runs to 265 residues: Hydroxyethylthiazole kinase (265 aa).

Met-43 is a substrate binding site. 2 residues coordinate ATP: Arg-119 and Ser-165. A substrate-binding site is contributed by Ala-192.

Belongs to the Thz kinase family. Mg(2+) is required as a cofactor.

The catalysed reaction is 5-(2-hydroxyethyl)-4-methylthiazole + ATP = 4-methyl-5-(2-phosphooxyethyl)-thiazole + ADP + H(+). Its pathway is cofactor biosynthesis; thiamine diphosphate biosynthesis; 4-methyl-5-(2-phosphoethyl)-thiazole from 5-(2-hydroxyethyl)-4-methylthiazole: step 1/1. Catalyzes the phosphorylation of the hydroxyl group of 4-methyl-5-beta-hydroxyethylthiazole (THZ). This is Hydroxyethylthiazole kinase from Haemophilus influenzae (strain 86-028NP).